The following is a 185-amino-acid chain: Threonylcarbamoyl-AMP synthase (185 aa).

One can recognise a YrdC-like domain in the interval 5 to 185 (NWRVRLAARI…RDGRTGQRLR (181 aa)).

The protein belongs to the SUA5 family. TsaC subfamily.

The protein localises to the cytoplasm. The catalysed reaction is L-threonine + hydrogencarbonate + ATP = L-threonylcarbamoyladenylate + diphosphate + H2O. Required for the formation of a threonylcarbamoyl group on adenosine at position 37 (t(6)A37) in tRNAs that read codons beginning with adenine. Catalyzes the conversion of L-threonine, HCO(3)(-)/CO(2) and ATP to give threonylcarbamoyl-AMP (TC-AMP) as the acyladenylate intermediate, with the release of diphosphate. This is Threonylcarbamoyl-AMP synthase from Nitrosococcus oceani (strain ATCC 19707 / BCRC 17464 / JCM 30415 / NCIMB 11848 / C-107).